The sequence spans 541 residues: Glucose-6-phosphate isomerase (541 aa).

Glu-346 acts as the Proton donor in catalysis. Catalysis depends on residues His-377 and Lys-506.

Belongs to the GPI family.

Its subcellular location is the cytoplasm. It carries out the reaction alpha-D-glucose 6-phosphate = beta-D-fructose 6-phosphate. It functions in the pathway carbohydrate biosynthesis; gluconeogenesis. It participates in carbohydrate degradation; glycolysis; D-glyceraldehyde 3-phosphate and glycerone phosphate from D-glucose: step 2/4. Its function is as follows. Catalyzes the reversible isomerization of glucose-6-phosphate to fructose-6-phosphate. This chain is Glucose-6-phosphate isomerase, found in Rhizobium meliloti (strain 1021) (Ensifer meliloti).